A 124-amino-acid chain; its full sequence is S-adenosylmethionine decarboxylase proenzyme (124 aa).

Catalysis depends on S63, which acts as the Schiff-base intermediate with substrate; via pyruvic acid. S63 bears the Pyruvic acid (Ser); by autocatalysis mark. H68 serves as the catalytic Proton acceptor; for processing activity. The active-site Proton donor; for catalytic activity is the C83.

The protein belongs to the prokaryotic AdoMetDC family. Type 1 subfamily. In terms of assembly, heterotetramer of two alpha and two beta chains arranged as a dimer of alpha/beta heterodimers. Pyruvate is required as a cofactor. In terms of processing, is synthesized initially as an inactive proenzyme. Formation of the active enzyme involves a self-maturation process in which the active site pyruvoyl group is generated from an internal serine residue via an autocatalytic post-translational modification. Two non-identical subunits are generated from the proenzyme in this reaction, and the pyruvate is formed at the N-terminus of the alpha chain, which is derived from the carboxyl end of the proenzyme. The post-translation cleavage follows an unusual pathway, termed non-hydrolytic serinolysis, in which the side chain hydroxyl group of the serine supplies its oxygen atom to form the C-terminus of the beta chain, while the remainder of the serine residue undergoes an oxidative deamination to produce ammonia and the pyruvoyl group blocking the N-terminus of the alpha chain.

The catalysed reaction is S-adenosyl-L-methionine + H(+) = S-adenosyl 3-(methylsulfanyl)propylamine + CO2. It participates in amine and polyamine biosynthesis; S-adenosylmethioninamine biosynthesis; S-adenosylmethioninamine from S-adenosyl-L-methionine: step 1/1. In terms of biological role, catalyzes the decarboxylation of S-adenosylmethionine to S-adenosylmethioninamine (dcAdoMet), the propylamine donor required for the synthesis of the polyamines spermine and spermidine from the diamine putrescine. This is S-adenosylmethionine decarboxylase proenzyme from Geobacillus kaustophilus (strain HTA426).